We begin with the raw amino-acid sequence, 103 residues long: Large ribosomal subunit protein eL21 (103 aa).

Belongs to the eukaryotic ribosomal protein eL21 family.

In Sulfolobus acidocaldarius (strain ATCC 33909 / DSM 639 / JCM 8929 / NBRC 15157 / NCIMB 11770), this protein is Large ribosomal subunit protein eL21.